A 196-amino-acid polypeptide reads, in one-letter code: Small ribosomal subunit protein uS4c (196 aa).

An S4 RNA-binding domain is found at 82-143 (MRLDNILFRL…KQKSKALIQN (62 aa)).

It belongs to the universal ribosomal protein uS4 family. Part of the 30S ribosomal subunit. Contacts protein S5. The interaction surface between S4 and S5 is involved in control of translational fidelity.

The protein localises to the plastid. It is found in the chloroplast. Its function is as follows. One of the primary rRNA binding proteins, it binds directly to 16S rRNA where it nucleates assembly of the body of the 30S subunit. Functionally, with S5 and S12 plays an important role in translational accuracy. This is Small ribosomal subunit protein uS4c (rps4) from Patersonia sp. (strain Lejeune 1997).